A 523-amino-acid polypeptide reads, in one-letter code: Cytochrome P450 52-N1 (523 aa).

A helical transmembrane segment spans residues 5-25 (AVLGAFAAFLLYMDVLYPFVI). C469 lines the heme pocket.

The protein belongs to the cytochrome P450 family. It depends on heme as a cofactor.

Its subcellular location is the membrane. The enzyme catalyses an omega-methyl-long-chain fatty acid + reduced [NADPH--hemoprotein reductase] + O2 = an omega-hydroxy-long-chain fatty acid + oxidized [NADPH--hemoprotein reductase] + H2O + H(+). It carries out the reaction (9Z,12Z)-octadecadienoate + reduced [NADPH--hemoprotein reductase] + O2 = 18-hydroxy-(9Z,12Z)-octadecadienoate + oxidized [NADPH--hemoprotein reductase] + H2O + H(+). The catalysed reaction is (9Z)-octadecenoate + reduced [NADPH--hemoprotein reductase] + O2 = 18-hydroxy-(9Z)-octadecenoate + oxidized [NADPH--hemoprotein reductase] + H2O + H(+). It catalyses the reaction hexadecanoate + reduced [NADPH--hemoprotein reductase] + O2 = 16-hydroxyhexadecanoate + oxidized [NADPH--hemoprotein reductase] + H2O + H(+). The enzyme catalyses (9Z)-hexadecenoate + reduced [NADPH--hemoprotein reductase] + O2 = (9Z)-16-hydroxyhexadec-9-enoate + oxidized [NADPH--hemoprotein reductase] + H2O + H(+). It carries out the reaction octadecanoate + reduced [NADPH--hemoprotein reductase] + O2 = 18-hydroxyoctadecanoate + oxidized [NADPH--hemoprotein reductase] + H2O + H(+). In terms of biological role, catalyzes the terminal (at the omega-position) hydroxylation of a fatty acid. Probably involved in alkane metabolism. Linoleic acid is the preferred substrate, but it acts on various other C-16, C-18 and C-20 saturated and unsaturated fatty acids, namely palmitic, palmitoleic, stearic, oleic, alpha-linoleic, arachidonic and myristic acid. This is Cytochrome P450 52-N1 from Starmerella bombicola (Yeast).